We begin with the raw amino-acid sequence, 221 residues long: Small ribosomal subunit protein uS3 (221 aa).

The 70-residue stretch at 39–108 folds into the KH type-2 domain; the sequence is IRKFVKKELF…NILINIVEVK (70 aa).

This sequence belongs to the universal ribosomal protein uS3 family. Part of the 30S ribosomal subunit. Forms a tight complex with proteins S10 and S14.

In terms of biological role, binds the lower part of the 30S subunit head. Binds mRNA in the 70S ribosome, positioning it for translation. The chain is Small ribosomal subunit protein uS3 from Clostridium botulinum (strain Alaska E43 / Type E3).